A 95-amino-acid polypeptide reads, in one-letter code: Large ribosomal subunit protein uL23 (95 aa).

It belongs to the universal ribosomal protein uL23 family. In terms of assembly, part of the 50S ribosomal subunit. Contacts protein L29, and trigger factor when it is bound to the ribosome.

Functionally, one of the early assembly proteins it binds 23S rRNA. One of the proteins that surrounds the polypeptide exit tunnel on the outside of the ribosome. Forms the main docking site for trigger factor binding to the ribosome. This chain is Large ribosomal subunit protein uL23, found in Desulfitobacterium hafniense (strain DSM 10664 / DCB-2).